Consider the following 367-residue polypeptide: B2 bradykinin receptor (367 aa).

Residues Met-1–Gln-36 are Extracellular-facing. 2 N-linked (GlcNAc...) asparagine glycosylation sites follow: Asn-3 and Asn-14. The helical transmembrane segment at Ala-37–Leu-60 threads the bilayer. Residues His-61 to Glu-69 lie on the Cytoplasmic side of the membrane. A helical transmembrane segment spans residues Val-70–Ala-94. At Asn-95–Arg-107 the chain is on the extracellular side. Cys-106 and Cys-187 form a disulfide bridge. A helical membrane pass occupies residues Val-108 to Ile-129. Topologically, residues Asp-130–Lys-151 are cytoplasmic. At Tyr-132 the chain carries Phosphotyrosine. Residues Leu-152–Met-174 form a helical membrane-spanning segment. Topologically, residues Lys-175–Glu-197 are extracellular. The N-linked (GlcNAc...) asparagine glycan is linked to Asn-183. Residues Val-198–Leu-224 form a helical membrane-spanning segment. At Gln-225–Arg-243 the chain is on the cytoplasmic side. A helical membrane pass occupies residues Ala-244–Leu-268. The Extracellular segment spans residues Asp-269–Asp-287. The helical transmembrane segment at Val-288–Val-311 threads the bilayer. The Cytoplasmic segment spans residues Gly-312–Gln-367. Residue Tyr-323 is modified to Phosphotyrosine. The S-palmitoyl cysteine moiety is linked to residue Cys-327. Ser-342 bears the Phosphoserine mark. Phosphothreonine is present on Thr-345. 2 positions are modified to phosphoserine; by GRK6: Ser-349 and Ser-351.

This sequence belongs to the G-protein coupled receptor 1 family. Bradykinin receptor subfamily. BDKRB2 sub-subfamily. In terms of assembly, forms a complex with PECAM1 and GNAQ. Interacts with PECAM1.

It localises to the cell membrane. Receptor for bradykinin. It is associated with G proteins that activate a phosphatidylinositol-calcium second messenger system. This is B2 bradykinin receptor (BDKRB2) from Oryctolagus cuniculus (Rabbit).